The following is a 347-amino-acid chain: NADH-ubiquinone oxidoreductase chain 2 (347 aa).

11 helical membrane-spanning segments follow: residues 1-21 (MNPMIFIILLTTIMLGTFIVT), 25-45 (HWFMTWLGFEMNMMAIVPVLM), 59-79 (YFLTQATASMILMLAIIINLM), 96-116 (MLITIALTMKLGLAPFHFWVP), 122-142 (VSLPSGLILLTWQKIAPLSLL), 149-169 (VNMNILLLMSLLSIMIGGWGG), 178-198 (IMAYSSIAHMGWMMAIMVYNP), 201-221 (SLLNLLIYIFMTSSMFMLLIF), 237-257 (APIITIMSLTTLLSLGGLPPL), 274-294 (NSVILPTLMAILALLNLFFYM), and 326-346 (MLPLITISTLALPLTPMLILL).

Belongs to the complex I subunit 2 family. As to quaternary structure, core subunit of respiratory chain NADH dehydrogenase (Complex I) which is composed of 45 different subunits. Interacts with TMEM242.

Its subcellular location is the mitochondrion inner membrane. The catalysed reaction is a ubiquinone + NADH + 5 H(+)(in) = a ubiquinol + NAD(+) + 4 H(+)(out). Core subunit of the mitochondrial membrane respiratory chain NADH dehydrogenase (Complex I) that is believed to belong to the minimal assembly required for catalysis. Complex I functions in the transfer of electrons from NADH to the respiratory chain. The immediate electron acceptor for the enzyme is believed to be ubiquinone. The chain is NADH-ubiquinone oxidoreductase chain 2 from Crocidura suaveolens gueldenstaedtii (Gueldenstaedt's shrew).